The following is a 125-amino-acid chain: Large ribosomal subunit protein bL19 (125 aa).

The protein belongs to the bacterial ribosomal protein bL19 family.

This protein is located at the 30S-50S ribosomal subunit interface and may play a role in the structure and function of the aminoacyl-tRNA binding site. The protein is Large ribosomal subunit protein bL19 of Wolbachia pipientis wMel.